We begin with the raw amino-acid sequence, 391 residues long: Terminal nucleotidyltransferase 5C (391 aa).

It belongs to the TENT family. In terms of assembly, interacts with BCCIP and PABPC1; the interaction has no effect on TENT5C poly(A) polymerase function. Interacts with PLK4; this interaction leads to the TENT5C recruitment into the centrosome.

The protein localises to the nucleus. The protein resides in the cytoplasm. Its subcellular location is the cytoskeleton. It localises to the microtubule organizing center. It is found in the centrosome. The enzyme catalyses RNA(n) + ATP = RNA(n)-3'-adenine ribonucleotide + diphosphate. Functionally, catalyzes the transfer of one adenosine molecule from an ATP to an mRNA poly(A) tail bearing a 3'-OH terminal group and enhances mRNA stability and gene expression. Can also elongate RNA oligos ending with uridine molecule, provided that the sequence is adenosine-rich. Mainly targets mRNAs encoding endoplasmic reticulum-targeted protein. The sequence is that of Terminal nucleotidyltransferase 5C from Macaca fascicularis (Crab-eating macaque).